Reading from the N-terminus, the 89-residue chain is Small ribosomal subunit protein uS15 (89 aa).

This sequence belongs to the universal ribosomal protein uS15 family. Part of the 30S ribosomal subunit. Forms a bridge to the 50S subunit in the 70S ribosome, contacting the 23S rRNA.

Functionally, one of the primary rRNA binding proteins, it binds directly to 16S rRNA where it helps nucleate assembly of the platform of the 30S subunit by binding and bridging several RNA helices of the 16S rRNA. Its function is as follows. Forms an intersubunit bridge (bridge B4) with the 23S rRNA of the 50S subunit in the ribosome. This chain is Small ribosomal subunit protein uS15, found in Blochmanniella pennsylvanica (strain BPEN).